Reading from the N-terminus, the 586-residue chain is RNA-directed RNA polymerase subunit beta (586 aa).

The region spanning 259–391 is the RdRp catalytic domain; it reads VRAYSGSCSN…TNEKKTFFDG (133 aa). Positions 274, 359, and 360 each coordinate Mg(2+).

In terms of assembly, homodimer; the replicase complex can dimerize. Part of the viral RNA-dependent RNA polymerase complex, the other subunits are the host ribosomal protein S1, EF-Tu and EF-Ts. S1 is needed for the initiation of genomic RNA (+)-strand replication. Mg(2+) is required as a cofactor.

The enzyme catalyses RNA(n) + a ribonucleoside 5'-triphosphate = RNA(n+1) + diphosphate. Functionally, this is the catalytic subunit of the viral RNA-dependent RNA polymerase complex. This complex is involved in viral RNA replication that produces (+)-stranded genomes via a complementary, (-)-stranded intermediate. Binds RNA cooperatively with the host ribosomal protein S1. This is RNA-directed RNA polymerase subunit beta from Escherichia coli.